The chain runs to 85 residues: Cell division topological specificity factor (85 aa).

The protein belongs to the MinE family.

Prevents the cell division inhibition by proteins MinC and MinD at internal division sites while permitting inhibition at polar sites. This ensures cell division at the proper site by restricting the formation of a division septum at the midpoint of the long axis of the cell. The polypeptide is Cell division topological specificity factor (Shewanella oneidensis (strain ATCC 700550 / JCM 31522 / CIP 106686 / LMG 19005 / NCIMB 14063 / MR-1)).